A 992-amino-acid polypeptide reads, in one-letter code: ATP-dependent 6-phosphofructokinase subunit alpha (992 aa).

The interval 1–558 (MNNSVYGVAF…LYSNFMSTTV (558 aa)) is N-terminal catalytic PFK domain 1. ATP-binding positions include Gly-193, 256-257 (RS), and 286-289 (GDGS). A Mg(2+)-binding site is contributed by Asp-287. Beta-D-fructose 6-phosphate-binding positions include 332–334 (SID), Arg-369, 376–378 (MGR), Glu-433, Lys-460, and 466–469 (HVQR). The active-site Proton acceptor is the Asp-334. The segment at 559 to 572 (NDDGSQLLPEADRL) is interdomain linker. Residues 573-992 (NIAIVHVGAP…AAKEDSALYV (420 aa)) are C-terminal regulatory PFK domain 2. Beta-D-fructose 2,6-bisphosphate is bound by residues Arg-643, 700-704 (TVSNN), Arg-738, 745-747 (QGG), Glu-805, Arg-831, 837-840 (HVQQ), and Arg-929.

It belongs to the phosphofructokinase type A (PFKA) family. ATP-dependent PFK group I subfamily. Eukaryotic two domain clade 'E' sub-subfamily. In terms of assembly, heterooctamer of 4 alpha and 4 beta chains. It depends on Mg(2+) as a cofactor.

Its subcellular location is the cytoplasm. The catalysed reaction is beta-D-fructose 6-phosphate + ATP = beta-D-fructose 1,6-bisphosphate + ADP + H(+). The protein operates within carbohydrate degradation; glycolysis; D-glyceraldehyde 3-phosphate and glycerone phosphate from D-glucose: step 3/4. Its activity is regulated as follows. Allosterically activated by ADP, AMP, or fructose 2,6-bisphosphate, and allosterically inhibited by ATP or citrate. Functionally, catalyzes the phosphorylation of D-fructose 6-phosphate to fructose 1,6-bisphosphate by ATP, the first committing step of glycolysis. The chain is ATP-dependent 6-phosphofructokinase subunit alpha (PFK1) from Kluyveromyces lactis (strain ATCC 8585 / CBS 2359 / DSM 70799 / NBRC 1267 / NRRL Y-1140 / WM37) (Yeast).